Here is a 510-residue protein sequence, read N- to C-terminus: NAD(P)H-quinone oxidoreductase subunit 2 A, chloroplastic (510 aa).

13 helical membrane passes run 31–51, 57–77, 99–119, 124–144, 149–169, 183–203, 229–249, 295–315, 323–343, 354–374, 395–415, 418–438, and 484–504; these read FIFPECILIFGLILLLMIDLT, TPWLYFISSTSLVMSITALLF, IFQFLILLCSTLCIPLSVEYI, MAITEFLLFVLTATLGGMFLC, LITIFVAPECFSLCSYLLSGY, YLLMGGASSSILVYGFSWLYG, ISIALISITVGIGFKLSPAPF, WHLLLEILAILSMILGNLIAI, MLAYSSIGQIGYVIIGIIVGD, YMLFYIAMNLGTFACIVLFGL, ALSSALCLLSLGGIPPLAGFF, LYLFWCGWQAGLYFLVSIGLL, and MIVCVIASTIPGISMNPIIAI.

It belongs to the complex I subunit 2 family. In terms of assembly, NDH is composed of at least 16 different subunits, 5 of which are encoded in the nucleus.

The protein localises to the plastid. The protein resides in the chloroplast thylakoid membrane. The enzyme catalyses a plastoquinone + NADH + (n+1) H(+)(in) = a plastoquinol + NAD(+) + n H(+)(out). It carries out the reaction a plastoquinone + NADPH + (n+1) H(+)(in) = a plastoquinol + NADP(+) + n H(+)(out). Functionally, NDH shuttles electrons from NAD(P)H:plastoquinone, via FMN and iron-sulfur (Fe-S) centers, to quinones in the photosynthetic chain and possibly in a chloroplast respiratory chain. The immediate electron acceptor for the enzyme in this species is believed to be plastoquinone. Couples the redox reaction to proton translocation, and thus conserves the redox energy in a proton gradient. The sequence is that of NAD(P)H-quinone oxidoreductase subunit 2 A, chloroplastic from Nymphaea alba (White water-lily).